Reading from the N-terminus, the 477-residue chain is Bifunctional protein HldE (477 aa).

The segment at 1-318 (MKVTLPEFER…ENAVRGRADT (318 aa)) is ribokinase. K179 is subject to N6-acetyllysine. Position 195–198 (195–198 (NLSE)) interacts with ATP. D264 is an active-site residue. Positions 344–477 (MTNGVFDILH…IKKIQQDKKG (134 aa)) are cytidylyltransferase.

This sequence in the N-terminal section; belongs to the carbohydrate kinase PfkB family. The protein in the C-terminal section; belongs to the cytidylyltransferase family. Homodimer.

The catalysed reaction is D-glycero-beta-D-manno-heptose 7-phosphate + ATP = D-glycero-beta-D-manno-heptose 1,7-bisphosphate + ADP + H(+). It carries out the reaction D-glycero-beta-D-manno-heptose 1-phosphate + ATP + H(+) = ADP-D-glycero-beta-D-manno-heptose + diphosphate. Its pathway is nucleotide-sugar biosynthesis; ADP-L-glycero-beta-D-manno-heptose biosynthesis; ADP-L-glycero-beta-D-manno-heptose from D-glycero-beta-D-manno-heptose 7-phosphate: step 1/4. It functions in the pathway nucleotide-sugar biosynthesis; ADP-L-glycero-beta-D-manno-heptose biosynthesis; ADP-L-glycero-beta-D-manno-heptose from D-glycero-beta-D-manno-heptose 7-phosphate: step 3/4. Functionally, catalyzes the phosphorylation of D-glycero-D-manno-heptose 7-phosphate at the C-1 position to selectively form D-glycero-beta-D-manno-heptose-1,7-bisphosphate. Catalyzes the ADP transfer from ATP to D-glycero-beta-D-manno-heptose 1-phosphate, yielding ADP-D-glycero-beta-D-manno-heptose. The polypeptide is Bifunctional protein HldE (Escherichia coli O17:K52:H18 (strain UMN026 / ExPEC)).